Consider the following 294-residue polypeptide: IVFRAAQKRSDIEIVAINDLLDAEYMAYMLKYDSTHGRFDGTVEVKDGHLVVNGKKIRVTAERDPANLKWDEVGVDVVAEATGIFLTDETARKHITAGAKKVVLTGPSKDNTPMFVRGANFDTYAGQDIVSNASCTTNCLAPLAKVINDNFGIVEGLMTTVHATTATQKTVDGPSHKDWRGGRGAAQNIIPSSTGAAKAVGKVLPELNGKLTGMAFRVPTPNVSVVDLTVRLEKAASYEEIKKAIKAASEGAMKGVLGYTEDDVVSTDFNGEVCTSVFDAKAGIALNDNFVKLV.

Residues aspartate 19, arginine 63, and threonine 105 each contribute to the NAD(+) site. Residues 134-136 (SCT) and threonine 165 contribute to the D-glyceraldehyde 3-phosphate site. Residue cysteine 135 is the Nucleophile of the active site. N6-acetyllysine is present on lysine 177. Residues 194 to 195 (TG) and arginine 217 each bind D-glyceraldehyde 3-phosphate. N6-acetyllysine is present on lysine 234.

Belongs to the glyceraldehyde-3-phosphate dehydrogenase family. In terms of assembly, homotetramer.

It is found in the cytoplasm. It carries out the reaction D-glyceraldehyde 3-phosphate + phosphate + NAD(+) = (2R)-3-phospho-glyceroyl phosphate + NADH + H(+). Its pathway is carbohydrate degradation; glycolysis; pyruvate from D-glyceraldehyde 3-phosphate: step 1/5. Its function is as follows. Catalyzes the oxidative phosphorylation of glyceraldehyde 3-phosphate (G3P) to 1,3-bisphosphoglycerate (BPG) using the cofactor NAD. The first reaction step involves the formation of a hemiacetal intermediate between G3P and a cysteine residue, and this hemiacetal intermediate is then oxidized to a thioester, with concomitant reduction of NAD to NADH. The reduced NADH is then exchanged with the second NAD, and the thioester is attacked by a nucleophilic inorganic phosphate to produce BPG. The chain is Glyceraldehyde-3-phosphate dehydrogenase (gap) from Pseudescherichia vulneris (Escherichia vulneris).